We begin with the raw amino-acid sequence, 115 residues long: Xenovulene A biosynthesis cluster protein asL2 (115 aa).

In terms of biological role, part of the gene cluster that mediates the biosynthesis of xenovulene A, an unusual meroterpenoid that has potent inhibitory effects on the human gamma-aminobutyrate A (GABAA) benzodiazepine receptor. The first step of xenovulene A biosynthesis is the biosynthesis of 3-methylorcinaldehyde performed by the non-reducing polyketide synthase aspks1. The salicylate hydroxylase asL1 then catalyzes the oxidative dearomatization of 3-methylorcinaldehyde to yield a dearomatized hydroxycyclohexadione. The 2-oxoglutarate-dependent dioxygenase asL3 further catalyzes the oxidative ring expansion to provide the first tropolone metabolite. The cytochrome P450 monooxygenase asR2 allows the synthesis of tropolone hemiacetal. In parallel, a previously unrecognised class of terpene cyclase, asR6, produces alpha-humulene from farnesylpyrophosphate (FPP). The putative Diels-Alderase asR5 probably catalyzes the formation of the tropolone-humulene skeleton by linking humulene and the polyketide moiety. Oxidative-ring contractions catalyzed by asL4 and asL6 then processively remove carbon atoms from the polyketide to yield xenovulene A. The protein is Xenovulene A biosynthesis cluster protein asL2 of Sarocladium schorii (Acremonium strictum (strain IMI 501407)).